Here is an 867-residue protein sequence, read N- to C-terminus: MNKTTEYIDALPLTVAEKATLPATDIRTLHETLNPEHHDYAREDDSPLGSVKARLEQSWPDSLVNRQLTEDDEGRTQLETMPKATRSSISPDPWRTNPIGRFWDHLRGHNATPHHVSRLTKEEQAHEQKWCTVGTIRRYILLLLTFSQTALATWYMKTILPYQGWALIDPIDMIGQDIWISFMQLLPYILQSGILILFAILFCWISAGFWTALMGFLQLLIGKDKYSISASLAGDVPINPEHRTALIMPICNEDVDRVFAGLRATWESVKATNQQQHFDIYILSDSYDPDICVAEQKAWIELLAEVQDKGQIFYRRRGRRVKRKSGNIDDFCRRWGSQYSYMVVLDADSVMSGECLTSLVRLMEANPNAGIIQSWPRASGMDTFYARCQQFATRVYGPLFTAGLHFWQLGESHYWGHNAIIRVQPFIEHCTLALLPGEGTFAGSILSHDFVEAALMRRAGWGVWIAYDLPGSYEELPPNLLDELKRDRRWCHGNLMNFRLFLVKGLHPVHRAVFLTGVMSYLSAPLWFMFLALSTALQVVHAFTEPHYFLQPHQLFPVWPQWQPELAIALLASTMVLLFLPKLLSILLIWCKGTKEYGGFIRVTISLLLEVILSVLLAPVRMLFHTVFVVSAFLGWKVAWKSPQRDDDSTTWREAFMRHGSQLLLGLVWATGMAWLDLRFLFWLAPIVFSLILSPFVSVFSSRASVGLRAKRWKLLLIPEEYSPPKVLVDTDNYLMMNRNRTLNDGFMHAVFHPSFNALTTATATARHRKSKVLEIARDHHIEQALNEPPDKLNRDCRLTLLSDPVIMSRLHYCVWAMPEKYASWVNHYQQLTLNPSALKQCEPNIEEEADYAEPTAQIDMALPGTP.

The tract at residues Asp71–Pro91 is disordered. 6 helical membrane-spanning segments follow: residues Tyr139–Met156, Ile194–Phe216, Val518–Val540, Ile568–Trp590, Val603–His625, and Phe680–Ser702.

It belongs to the glycosyltransferase 2 family. OpgH subfamily.

It is found in the cell inner membrane. It participates in glycan metabolism; osmoregulated periplasmic glucan (OPG) biosynthesis. In terms of biological role, involved in the biosynthesis of osmoregulated periplasmic glucans (OPGs). This chain is Glucans biosynthesis glucosyltransferase H, found in Nitrosomonas europaea (strain ATCC 19718 / CIP 103999 / KCTC 2705 / NBRC 14298).